Reading from the N-terminus, the 301-residue chain is Methionyl-tRNA formyltransferase (301 aa).

109-112 (SLLP) contacts (6S)-5,6,7,8-tetrahydrofolate.

The protein belongs to the Fmt family.

The enzyme catalyses L-methionyl-tRNA(fMet) + (6R)-10-formyltetrahydrofolate = N-formyl-L-methionyl-tRNA(fMet) + (6S)-5,6,7,8-tetrahydrofolate + H(+). In terms of biological role, attaches a formyl group to the free amino group of methionyl-tRNA(fMet). The formyl group appears to play a dual role in the initiator identity of N-formylmethionyl-tRNA by promoting its recognition by IF2 and preventing the misappropriation of this tRNA by the elongation apparatus. This is Methionyl-tRNA formyltransferase from Jannaschia sp. (strain CCS1).